The following is a 706-amino-acid chain: Polycomb protein SCMH1 (706 aa).

MBT repeat units follow at residues phenylalanine 28–proline 126 and serine 134–proline 235. 2 disordered regions span residues glutamine 233–serine 350 and glycine 576–serine 595. 2 stretches are compositionally biased toward basic residues: residues arginine 272–threonine 283 and phenylalanine 304–arginine 319. The segment covering proline 329 to threonine 340 has biased composition (low complexity). The span at glycine 576–glycine 591 shows a compositional bias: basic and acidic residues. The SAM domain occupies tryptophan 597–valine 662.

It belongs to the SCM family. In terms of assembly, associates with a PRC1-like complex. Interacts with the SAM domain of PHC1 via its SAM domain in vitro. Most abundant in testis. Moderate levels detected in heart, brain, lung, liver, skeletal muscle and kidney and lower levels in spleen.

Its subcellular location is the nucleus. Functionally, associates with Polycomb group (PcG) multiprotein complexes; the complex class is required to maintain the transcriptionally repressive state of some genes. In Mus musculus (Mouse), this protein is Polycomb protein SCMH1.